Here is a 211-residue protein sequence, read N- to C-terminus: Small ribosomal subunit protein uS3 (211 aa).

Residues 38 to 106 (LRNFLKKRLY…EVYLNIQEVR (69 aa)) form the KH type-2 domain.

Belongs to the universal ribosomal protein uS3 family. Part of the 30S ribosomal subunit. Forms a tight complex with proteins S10 and S14.

Functionally, binds the lower part of the 30S subunit head. Binds mRNA in the 70S ribosome, positioning it for translation. This is Small ribosomal subunit protein uS3 from Citrifermentans bemidjiense (strain ATCC BAA-1014 / DSM 16622 / JCM 12645 / Bem) (Geobacter bemidjiensis).